A 361-amino-acid chain; its full sequence is CRISPR system associated protein Cas8 (361 aa).

As to quaternary structure, monomer. Can form a Cascade complex with Csa5, Cas7, Cas5a, Cas3 and Cas3'.

Its function is as follows. CRISPR (clustered regularly interspaced short palindromic repeat) is an adaptive immune system that provides protection against mobile genetic elements (viruses, transposable elements and conjugative plasmids). CRISPR clusters contain sequences complementary to antecedent mobile elements and target invading nucleic acids. CRISPR clusters are transcribed and processed into CRISPR RNA (crRNA). The polypeptide is CRISPR system associated protein Cas8 (cas8a2) (Thermoproteus tenax (strain ATCC 35583 / DSM 2078 / JCM 9277 / NBRC 100435 / Kra 1)).